A 1021-amino-acid polypeptide reads, in one-letter code: Caspase recruitment domain-containing protein 10 (1021 aa).

The segment at 1 to 24 (MQGRADAGEADEEAGAGSGSEAEE) is disordered. A Phosphoserine modification is found at Ser-18. The CARD domain maps to 23-115 (EEDALWERIE…EHFTLLTGQE (93 aa)). Positions 138–450 (TEVRRLREAR…LEAQLQRTQG (313 aa)) form a coiled coil. Disordered stretches follow at residues 475–544 (EFPS…MSDI), 597–616 (SPPA…PGLG), and 790–809 (LVRP…QLPA). Composition is skewed to basic and acidic residues over residues 495-508 (HTSE…KEIN) and 525-535 (RQREEDPEPPK).

CARD10 and BCL10 bind to each other by CARD-CARD interaction. They both participate in a complex with MALT1, where MALT1 binds to BCL10. Interacts with TMEM43; this interaction is essential for EGFR-mediated NF-kappa-B activation. As to expression, highly expressed in kidney, heart followed by brain, lung, liver, skeletal muscle and testis.

Functionally, scaffold protein that plays an important role in mediating the activation of NF-kappa-B via BCL10 or EGFR. In Mus musculus (Mouse), this protein is Caspase recruitment domain-containing protein 10 (Card10).